The sequence spans 389 residues: S-adenosylmethionine synthase (389 aa).

His-15 serves as a coordination point for ATP. Position 17 (Asp-17) interacts with Mg(2+). Glu-43 serves as a coordination point for K(+). The L-methionine site is built by Glu-56 and Gln-99. The segment at 99–109 is flexible loop; that stretch reads QSPDIAQGVNE. ATP contacts are provided by residues 166-168, 234-235, Asp-243, 249-250, Ala-266, and Lys-270; these read DAK, RF, and RK. Asp-243 is a binding site for L-methionine. Lys-274 contributes to the L-methionine binding site.

This sequence belongs to the AdoMet synthase family. As to quaternary structure, homotetramer; dimer of dimers. It depends on Mg(2+) as a cofactor. The cofactor is K(+).

It localises to the cytoplasm. The catalysed reaction is L-methionine + ATP + H2O = S-adenosyl-L-methionine + phosphate + diphosphate. It participates in amino-acid biosynthesis; S-adenosyl-L-methionine biosynthesis; S-adenosyl-L-methionine from L-methionine: step 1/1. Functionally, catalyzes the formation of S-adenosylmethionine (AdoMet) from methionine and ATP. The overall synthetic reaction is composed of two sequential steps, AdoMet formation and the subsequent tripolyphosphate hydrolysis which occurs prior to release of AdoMet from the enzyme. The sequence is that of S-adenosylmethionine synthase from Laribacter hongkongensis (strain HLHK9).